Here is a 455-residue protein sequence, read N- to C-terminus: MARPVVAIIGRPNVGKSTLVNRLCRSREAIVHDEPGVTRDRTYQDGYWGDREFKVVDTGGLVFDDDSEFLPEIREQAALAMEEASVAVVIVDGQQGITAADESIAEFLRSRPCPTLLAVNKCESPEQGLAMAAEFWSLGLGEPHPISAIHGVGTGDLLDQVLTFLPPKDQEGDEEEPIQMAIIGRPNVGKSSLLNAICGEQRAIVSPIRGTTRDTIDTNIVRENRPWRLVDTAGIRRRRSVNYGPEYFGINRSFKAIDRSDVCVLVIDALDGVTEQDQRLAGRIEEDGRACVVVVNKWDAVEKDSHTMTAMEKELRAKLYFLDWAPMLFTSALTGQRVDSIFALAALAVEQHRRRVSTSVVNEVLKEALSWRSPPTTRGGRQGRLYYGTQVASRPPSFTLFVNDPKLFGDTYRRYVERQIREGLGFDGTPVKLYWRGKQQRDAERDMVRQQNRQS.

EngA-type G domains are found at residues 4–169 (PVVA…PPKD) and 178–353 (IQMA…EQHR). GTP is bound by residues 10–17 (GRPNVGKS), 57–61 (DTGGL), 120–123 (NKCE), 184–191 (GRPNVGKS), 231–235 (DTAGI), and 296–299 (NKWD). Positions 354 to 439 (RRVSTSVVNE…PVKLYWRGKQ (86 aa)) constitute a KH-like domain.

The protein belongs to the TRAFAC class TrmE-Era-EngA-EngB-Septin-like GTPase superfamily. EngA (Der) GTPase family. As to quaternary structure, associates with the 50S ribosomal subunit.

Functionally, GTPase that plays an essential role in the late steps of ribosome biogenesis. The chain is GTPase Der from Parasynechococcus marenigrum (strain WH8102).